The sequence spans 1216 residues: Apical endosomal glycoprotein (1216 aa).

Positions 1–22 (MPLSSHLLPALVLFLAGSSGWA) are cleaved as a signal peptide. Residues 23-1151 (WVPNHCRSPG…SPGNTAAPGS (1129 aa)) are Extracellular-facing. Residues 26 to 53 (NHCRSPGQAVCNFVCDCRDCSDEAQCGY) form the LDL-receptor class A 1; truncated domain. The 159-residue stretch at 64–222 (FACDFEQDPC…DDLEFWDCGL (159 aa)) folds into the MAM 1 domain. N-linked (GlcNAc...) asparagine glycosylation is present at N203. Residues 228–266 (NCPPGHHHCQNKVCVEPQQLCDGEDNCGDLSDENPLTCG) form the LDL-receptor class A 2 domain. 3 disulfide bridges follow: C229–C241, C236–C254, and C248–C265. In terms of domain architecture, MAM 2 spans 269–425 (IATDFETGLG…DLILSDHCRP (157 aa)). The segment at 280–307 (WNRSEGWSRNHRAGGPERPSWPRRDHSR) is disordered. N-linked (GlcNAc...) asparagine glycosylation is found at N281 and N339. The segment at 429–455 (VSTLQPLPPGPRAPAPQPLPPSSRLQD) is disordered. Pro residues predominate over residues 434–449 (PLPPGPRAPAPQPLPP). Residues 456-491 (SCKQGHLACGDLCVPPEQLCDFEEQCAGGEDEQACG) form the LDL-receptor class A 3 domain. 3 disulfide bridges follow: C457-C468, C464-C481, and C475-C490. 4 MAM domains span residues 491 to 644 (GTTD…DCSP), 654 to 809 (VSCN…PCWA), 811 to 969 (NYCS…PCPQ), and 971 to 1138 (GSCD…HCQQ). 2 N-linked (GlcNAc...) asparagine glycosylation sites follow: N583 and N636. A glycan (N-linked (GlcNAc...) asparagine) is linked at N835. A helical transmembrane segment spans residues 1152 to 1172 (VPAVVGSALLLLMLLVLLGLG). At 1173-1216 (GRRWLQKKGSCPFQSNTEATAPGFDNILFNADGVTLPASVTSDP) the chain is on the cytoplasmic side.

It localises to the membrane. Its function is as follows. Probably involved in the sorting and selective transport of receptors and ligands across polarized epithelia. The sequence is that of Apical endosomal glycoprotein from Homo sapiens (Human).